Reading from the N-terminus, the 570-residue chain is Transmembrane 7 superfamily member 3 (570 aa).

Positions 1–21 are cleaved as a signal peptide; that stretch reads MGFLQLLVVAVLASEHRVAGA. N-linked (GlcNAc...) asparagine glycans are attached at residues asparagine 27, asparagine 61, asparagine 75, asparagine 87, and asparagine 264. The next 7 helical transmembrane spans lie at 296-313, 320-342, 347-369, 371-393, 408-430, 437-459, and 479-501; these read VFFT…FFGH, LFFI…LTPI, NLIL…WWRF, ILSI…VTFF, FWVT…LRIL, VIGS…SYIT, and PFQT…GITL.

As to expression, widely expressed. Highly expressed in kidney and pancreas.

It is found in the cell membrane. Its function is as follows. Involved in the inhibition of cytokine-induced death of pancreatic beta cells. Involved in the promotion of insulin secretion from pancreatic beta cells. Is a downstream transcriptional target of p53/TP53, and acts as a pro-survival homeostatic factor that attenuates the development of cellular stress. Maintains protein homeostasis and promotes cell survival through attenuation of endoplasmic reticulum (ER) stress and the subsequent induction of unfolded protein response (UPR). The sequence is that of Transmembrane 7 superfamily member 3 (TM7SF3) from Homo sapiens (Human).